We begin with the raw amino-acid sequence, 321 residues long: Biotin synthase (321 aa).

In terms of domain architecture, Radical SAM core spans 45–271 (YYGKKVKLNM…INPTKEIRIA (227 aa)). Residues Cys-63, Cys-67, and Cys-70 each coordinate [4Fe-4S] cluster. Residues Cys-106, Cys-139, Cys-199, and Arg-269 each coordinate [2Fe-2S] cluster.

The protein belongs to the radical SAM superfamily. Biotin synthase family. As to quaternary structure, homodimer. Requires [4Fe-4S] cluster as cofactor. It depends on [2Fe-2S] cluster as a cofactor.

The enzyme catalyses (4R,5S)-dethiobiotin + (sulfur carrier)-SH + 2 reduced [2Fe-2S]-[ferredoxin] + 2 S-adenosyl-L-methionine = (sulfur carrier)-H + biotin + 2 5'-deoxyadenosine + 2 L-methionine + 2 oxidized [2Fe-2S]-[ferredoxin]. Its pathway is cofactor biosynthesis; biotin biosynthesis; biotin from 7,8-diaminononanoate: step 2/2. In terms of biological role, catalyzes the conversion of dethiobiotin (DTB) to biotin by the insertion of a sulfur atom into dethiobiotin via a radical-based mechanism. The polypeptide is Biotin synthase (Staphylococcus epidermidis (strain ATCC 35984 / DSM 28319 / BCRC 17069 / CCUG 31568 / BM 3577 / RP62A)).